We begin with the raw amino-acid sequence, 161 residues long: Cyclic pyranopterin monophosphate synthase (161 aa).

Residues 75 to 77 and 114 to 115 contribute to the substrate site; these read MCH and ME. Aspartate 129 is a catalytic residue.

It belongs to the MoaC family. In terms of assembly, homohexamer; trimer of dimers.

It catalyses the reaction (8S)-3',8-cyclo-7,8-dihydroguanosine 5'-triphosphate = cyclic pyranopterin phosphate + diphosphate. It functions in the pathway cofactor biosynthesis; molybdopterin biosynthesis. Catalyzes the conversion of (8S)-3',8-cyclo-7,8-dihydroguanosine 5'-triphosphate to cyclic pyranopterin monophosphate (cPMP). This is Cyclic pyranopterin monophosphate synthase from Staphylococcus carnosus (strain TM300).